Here is a 352-residue protein sequence, read N- to C-terminus: S-adenosylmethionine:tRNA ribosyltransferase-isomerase (352 aa).

This sequence belongs to the QueA family. In terms of assembly, monomer.

Its subcellular location is the cytoplasm. The enzyme catalyses 7-aminomethyl-7-carbaguanosine(34) in tRNA + S-adenosyl-L-methionine = epoxyqueuosine(34) in tRNA + adenine + L-methionine + 2 H(+). It participates in tRNA modification; tRNA-queuosine biosynthesis. In terms of biological role, transfers and isomerizes the ribose moiety from AdoMet to the 7-aminomethyl group of 7-deazaguanine (preQ1-tRNA) to give epoxyqueuosine (oQ-tRNA). This is S-adenosylmethionine:tRNA ribosyltransferase-isomerase from Vibrio cholerae serotype O1 (strain ATCC 39315 / El Tor Inaba N16961).